Consider the following 185-residue polypeptide: Transcription termination/antitermination protein NusG (185 aa).

Positions 134 to 163 (VGQQVRIVEGPFATFSGEVEEVMSERNKVR) constitute a KOW domain.

The protein belongs to the NusG family.

Participates in transcription elongation, termination and antitermination. The chain is Transcription termination/antitermination protein NusG from Treponema pallidum (strain Nichols).